We begin with the raw amino-acid sequence, 260 residues long: tRNA (guanine-N(1)-)-methyltransferase (260 aa).

Residues glycine 117 and 137-142 (LGDFVL) each bind S-adenosyl-L-methionine.

This sequence belongs to the RNA methyltransferase TrmD family. Homodimer.

The protein resides in the cytoplasm. The enzyme catalyses guanosine(37) in tRNA + S-adenosyl-L-methionine = N(1)-methylguanosine(37) in tRNA + S-adenosyl-L-homocysteine + H(+). Functionally, specifically methylates guanosine-37 in various tRNAs. The sequence is that of tRNA (guanine-N(1)-)-methyltransferase from Cupriavidus taiwanensis (strain DSM 17343 / BCRC 17206 / CCUG 44338 / CIP 107171 / LMG 19424 / R1) (Ralstonia taiwanensis (strain LMG 19424)).